The chain runs to 328 residues: Pancreas transcription factor 1 subunit alpha (328 aa).

The bHLH domain maps to 163–215 (QLRQAANVRERRRMQSINDAFEGLRSHIPTLPYEKRLSKVDTLRLAIGYINFL). 2 disordered regions span residues 259 to 278 (RGTRSPSPSDPDYGLPPLAG) and 305 to 328 (DPRKLNSKSSFNNIENEPPFEFVS).

Component of the pancreas transcription factor 1 complex (PTF1) which is composed of TCF3/p75, TCF12/p64 and PTF1A/p48. TCF3 is responsible for the nuclear import of the p48/p64 complex. Interacts with TCF3 and RBPSUH/RBP-Jkappa. In terms of tissue distribution, pancreas-specific (at protein level). Loss of expression is seen in ductal type pancreas cancers.

The protein resides in the nucleus. It is found in the cytoplasm. Its function is as follows. Transcription factor implicated in the cell fate determination in various organs. Binds to the E-box consensus sequence 5'-CANNTG-3'. Plays a role in early and late pancreas development and differentiation. Important for determining whether cells allocated to the pancreatic buds continue towards pancreatic organogenesis or revert back to duodenal fates. May be involved in the maintenance of exocrine pancreas-specific gene expression including ELA1 and amylase. Required for the formation of pancreatic acinar and ductal cells. Plays an important role in cerebellar development. Directly regulated by FOXN4 and RORC during retinal development, FOXN4-PTF1A pathway plays a central role in directing the differentiation of retinal progenitors towards horizontal and amacrine fates. The chain is Pancreas transcription factor 1 subunit alpha (PTF1A) from Homo sapiens (Human).